An 892-amino-acid chain; its full sequence is Gamma-tubulin small complex component GCP3 (892 aa).

It belongs to the TUBGCP family. In terms of assembly, component of the gamma-tubulin small complex (gamma-TuSC) composed of tubulin gamma chain, gamma-tubulin complex protein 2 (GCP2) and gamma-tubulin complex protein 3 (GCP3). Interacts with tubulin gamma chain.

It is found in the cytoplasm. The protein localises to the cytoskeleton. It localises to the flagellum axoneme. The protein resides in the flagellum basal body. Functionally, component of the gamma-tubulin small complex (gamma-TuSC) involved in microtubule (MT) nucleation for the formation of median bodies and in the biogenesis of flagella. Gamma-TuSC may be required for the correct positioning of EB1 within the trophozoites. This Giardia intestinalis (strain ATCC 50803 / WB clone C6) (Giardia lamblia) protein is Gamma-tubulin small complex component GCP3.